The primary structure comprises 279 residues: Reaction center protein L chain (279 aa).

The next 3 helical transmembrane spans lie at 33 to 56 (GFFG…GASQ), 85 to 113 (GLWQ…RKLG), and 116 to 141 (YHVP…ILMG). Positions 154 and 174 each coordinate (7R,8Z)-bacteriochlorophyll b. The helical transmembrane segment at 171 to 200 (NPAHMLAITFFFTTTLAMSMHGGLILSAAN) threads the bilayer. His191 contacts Fe cation. Phe217 contacts a ubiquinone. The chain crosses the membrane as a helical span at residues 226-252 (GSLGIHRLGLFLALSAAFWSAVCIVIS). Residue His231 coordinates Fe cation.

The protein belongs to the reaction center PufL/M/PsbA/D family. In terms of assembly, reaction center is composed of four bacteriochlorophylls, two bacteriopheophytins, two ubiquinones, one iron, and three highly hydrophobic polypeptide chains (designated L, M, and H).

Its subcellular location is the cell inner membrane. Functionally, the reaction center is a membrane-bound complex that mediates the initial photochemical event in the electron transfer process of photosynthesis. The chain is Reaction center protein L chain (pufL) from Rubrivivax gelatinosus (Rhodocyclus gelatinosus).